A 107-amino-acid polypeptide reads, in one-letter code: Small integral membrane protein 19 (107 aa).

Residues 25–43 (ATNVYLIVILVSFGLFMYA) form a helical membrane-spanning segment.

Belongs to the SMIM19 family.

It is found in the membrane. This Homo sapiens (Human) protein is Small integral membrane protein 19 (SMIM19).